Here is a 234-residue protein sequence, read N- to C-terminus: Phycobilisome rod-core linker polypeptide cpcG (234 aa).

The region spanning 11-191 (SSQNHRVNSF…PRYGSDFKER (181 aa)) is the PBS-linker domain.

The protein belongs to the phycobilisome linker protein family. As to quaternary structure, the phycobilisome is a hemidiscoidal structure that is composed of two distinct substructures: a core complex and a number of rods radiating from the core.

Its subcellular location is the plastid. The protein localises to the chloroplast thylakoid membrane. Rod-core linker protein required for attachment of phycocyanin to allophycocyanin in cores of phycobilisomes. In terms of biological role, linker polypeptides determine the state of aggregation and the location of the disk-shaped phycobiliprotein units within the phycobilisome and modulate their spectroscopic properties in order to mediate a directed and optimal energy transfer. The chain is Phycobilisome rod-core linker polypeptide cpcG (cpcG) from Cyanidium caldarium (Red alga).